The primary structure comprises 873 residues: Nonsense-mediated mRNA decay factor SMG8 (873 aa).

Residues 531-604 (AKKMAQREDE…ESMASKTERE (74 aa)) form a disordered region. A compositionally biased stretch (acidic residues) spans 540 to 550 (ELAEEDTDLDI). Low complexity-rich tracts occupy residues 551–562 (PESLLDPDSTSP) and 574–583 (SSSESSSQES). Positions 591-604 (SRRDESMASKTERE) are enriched in basic and acidic residues.

This sequence belongs to the SMG8 family.

Functionally, involved in nonsense-mediated decay (NMD) of mRNAs containing premature stop codons. Probable component of kinase complex containing smg-1 and recruited to stalled ribosomes. This Caenorhabditis elegans protein is Nonsense-mediated mRNA decay factor SMG8 (smg-8).